Consider the following 182-residue polypeptide: Small ribosomal subunit protein uS4 (182 aa).

2 disordered regions span residues 1–23 and 158–182; these read MGHPKKPRKQYDTPSHPWNADRI and SSVAKQFETQETEEVAAEEEPKDEE. Residues 103–170 form the S4 RNA-binding domain; it reads RRLQSLVFKR…AKQFETQETE (68 aa). Residues 167-182 show a composition bias toward acidic residues; that stretch reads QETEEVAAEEEPKDEE.

This sequence belongs to the universal ribosomal protein uS4 family. Part of the 30S ribosomal subunit. Contacts protein S5. The interaction surface between S4 and S5 is involved in control of translational fidelity.

Functionally, one of the primary rRNA binding proteins, it binds directly to 16S rRNA where it nucleates assembly of the body of the 30S subunit. With S5 and S12 plays an important role in translational accuracy. The sequence is that of Small ribosomal subunit protein uS4 from Methanosphaera stadtmanae (strain ATCC 43021 / DSM 3091 / JCM 11832 / MCB-3).